The chain runs to 244 residues: Probable phosphatase CA_C0509 (244 aa).

Residues His8, His10, His16, His41, Glu74, His102, His132, Asp193, and His195 each coordinate Zn(2+).

It belongs to the PHP family. Requires Zn(2+) as cofactor.

The protein is Probable phosphatase CA_C0509 of Clostridium acetobutylicum (strain ATCC 824 / DSM 792 / JCM 1419 / IAM 19013 / LMG 5710 / NBRC 13948 / NRRL B-527 / VKM B-1787 / 2291 / W).